The sequence spans 953 residues: Nucleotide-binding oligomerization domain-containing protein 1 (953 aa).

The region spanning 15–107 (GCHSHIKLLK…VDLRLWLSEI (93 aa)) is the CARD domain. The NACHT domain occupies 196–531 (ETVFVFGDAG…AFFTAFFLVA (336 aa)). ATP is bound at residue 202 to 209 (GDAGVGKS). 2 S-palmitoyl cysteine lipidation sites follow: C558 and C567. LRR repeat units lie at residues 702-725 (FHRQ…ELQP), 727-750 (FSRL…VLCE), 755-778 (YKIV…YVAQ), 783-806 (CRGL…CVAL), 839-862 (HPSL…SLAQ), 867-890 (NTTL…CFAE), 895-918 (NQTL…QLAR), and 923-946 (NTAI…VFEN). C952 carries S-palmitoyl cysteine lipidation.

The protein belongs to the NOD1-NOD2 family. As to quaternary structure, homooligomer: homooligomerizes following ligand-binding, promoting RIPK2 recruitment. Interacts (via CARD domain) with RIPK2 (via CARD domain). Following RIPK2 recruitment, RIPK2 homooligomerizes via its CARD domain and forms long filaments named RIPosomes. Interacts (via CARD domain) with ubiquitin; inhibiting interaction with RIPK2. Interacts with ARHGEF2. Interacts with NLRP10 and recruits it to the cell membrane following invasive bacterial infection. Interacts with IFIH1; this interaction promotes transcription of antiviral genes and inhibition of viral replication. Interacts with Irgm1; promoting NOD1 degradation. Interacts with ATG16L1. In terms of processing, ubiquitinated. 'Lys-48'-linked polyubiquitination by RNF34 promotes proteasomal degradation and thereby negatively regulates NOD1 for instance in NF-kappa-B activation. Palmitoylated. Palmitoylation is required for proper recruitment to the bacterial entry site and hence for proper signaling upon cognate peptidoglycan detection. Post-translationally, degraded via selective autophagy following interaction with Irgm1. Irgm1 promotes NOD1-RIPK2 RIPosome recruitment to autophagosome membranes, promoting their SQSTM1/p62-dependent autophagic degradation. As to expression, although ubiquitously expressed, NOD1 levels are more abundant in immune cells, the gastrointestinal tract, and adipose tissue.

The protein localises to the cell membrane. The protein resides in the apical cell membrane. Its subcellular location is the basolateral cell membrane. It localises to the cytoplasm. Functionally, pattern recognition receptor (PRR) that detects bacterial peptidoglycan fragments and other danger signals and thus participates in both innate and adaptive immune responses. Specifically recognizes and binds gamma-D-glutamyl-meso-diaminopimelic acid (iE-DAP), a dipeptide present in peptidoglycan of Gram-negative bacteria. Preferentially binds iE-DAP in tetrapeptide-containing muropeptides (MurNAc-TetraDAP or TetraDAP). Ligand binding triggers oligomerization that facilitates the binding and subsequent activation of the proximal adapter receptor-interacting RIPK2. Following recruitment, RIPK2 undergoes 'Met-1'- (linear) and 'Lys-63'-linked polyubiquitination by E3 ubiquitin-protein ligases XIAP, BIRC2, BIRC3 and the LUBAC complex, becoming a scaffolding protein for downstream effectors, triggering activation of the NF-kappa-B and MAP kinases signaling. This in turn leads to the transcriptional activation of hundreds of genes involved in immune response. Also acts as a regulator of antiviral response elicited by dsRNA and the expression of RLR pathway members by targeting IFIH1 and TRAF3 to modulate the formation of IFIH1-MAVS and TRAF3-MAVS complexes leading to increased transcription of type I IFNs. Also acts as a regulator of autophagy via its interaction with ATG16L1, possibly by recruiting ATG16L1 at the site of bacterial entry. Besides recognizing pathogens, also involved in the endoplasmic reticulum stress response: acts by sensing and binding to the cytosolic metabolite sphingosine-1-phosphate generated in response to endoplasmic reticulum stress, initiating an inflammation process that leads to activation of the NF-kappa-B and MAP kinases signaling. In addition, plays a role in insulin trafficking in beta cells in a cell-autonomous manner. Mechanistically, upon recognizing cognate ligands, NOD1 and RIPK2 localize to insulin vesicles where they recruit RAB1A to direct insulin trafficking through the cytoplasm. This is Nucleotide-binding oligomerization domain-containing protein 1 from Mus musculus (Mouse).